Here is a 290-residue protein sequence, read N- to C-terminus: Fructose-1,6-bisphosphatase class 1 (290 aa).

Residues Glu-78, Asp-96, Leu-98, and Asp-99 each contribute to the Mg(2+) site. Substrate-binding positions include 99 to 102, Tyr-201, and Lys-226; that span reads DGSS. A Mg(2+)-binding site is contributed by Glu-232.

It belongs to the FBPase class 1 family. Homotetramer. The cofactor is Mg(2+).

It is found in the cytoplasm. The catalysed reaction is beta-D-fructose 1,6-bisphosphate + H2O = beta-D-fructose 6-phosphate + phosphate. It participates in carbohydrate biosynthesis; gluconeogenesis. The sequence is that of Fructose-1,6-bisphosphatase class 1 from Helicobacter pylori (strain G27).